The sequence spans 356 residues: Proline-rich protein 19 (356 aa).

The segment covering 1 to 12 has biased composition (polar residues); it reads MDTQGPVSQPFQ. Disordered regions lie at residues 1–53, 95–143, 216–255, and 312–331; these read MDTQ…RDPP, LVPG…ELSG, INSP…RGSL, and PSSP…SPPS. Basic residues predominate over residues 19–29; it reads RVRRRKTRRER.

In terms of assembly, interacts with CNTD1.

The protein resides in the nucleus. It localises to the chromosome. In terms of biological role, promotes meiotic crossing over formation through its interaction with CNTD1 by participating in the crossover differentiation step of crossover-specific recombination intermediates. This chain is Proline-rich protein 19, found in Homo sapiens (Human).